The sequence spans 2171 residues: ATP-binding cassette sub-family C member Sur (2171 aa).

The Extracellular segment spans residues 1–36; the sequence is MKQLFNIIHCDHLNGHVRSIYDNLNTDICGIDRVRR. The chain crosses the membrane as a helical span at residues 37 to 57; it reads VFTFFSIFLLLFGLMFVCSRY. At 58 to 71 the chain is on the cytoplasmic side; that stretch reads KKCHKTLLTFHNGR. A helical transmembrane segment spans residues 72-92; sequence AAISLLLLALNSFDLARIFLP. At 93-112 the chain is on the extracellular side; the sequence is HQNVRNLNRLFQSSPRDLNY. A helical membrane pass occupies residues 113 to 133; it reads LVVIGSGELWNALFSTLLTLM. Topologically, residues 134 to 145 are cytoplasmic; it reads LMLYHRMVERKK. A helical membrane pass occupies residues 146 to 166; it reads ATVFLYASTAVEALTFALLSN. The Extracellular segment spans residues 167–182; sequence ELFELVRYEDFLELQT. Residues 183 to 203 form a helical membrane-spanning segment; it reads CLVAMSAMCMVSLAMLDGLTV. Over 204 to 224 the chain is Cytoplasmic; the sequence is YKECYHDDYLDDYGKIGYKHS. The chain crosses the membrane as a helical span at residues 225 to 245; sequence MATFYSKSCFWWLTPLLWLGY. Topologically, residues 246–299 are extracellular; sequence KEPLELEDLGQMKLEDSARSHYDHFLYIYTEKKKKSNSSPSLWYCYIKNSWQMF. Residues 300–320 traverse the membrane as a helical segment; sequence ALGGILKLAGDLFALIGPLAI. The Cytoplasmic segment spans residues 321-447; the sequence is QKIVEYIEQL…MTEDTRNIME (127 aa). An ABC transmembrane type-1 1 domain is found at 344–622; sequence NEVANVLLST…FPITVPIIIA (279 aa). Positions 388-434 are disordered; sequence DSSDSAGQVQSTSSTSDEKQKNDDSMATPEHVDNPSEPNISHDIGSI. The segment covering 389 to 402 has biased composition (polar residues); the sequence is SSDSAGQVQSTSST. Positions 403-421 are enriched in basic and acidic residues; the sequence is SDEKQKNDDSMATPEHVDN. The helical transmembrane segment at 448–468 threads the bilayer; the sequence is FFLIIHYAWAIPFKIAVVIYL. Residues 469–474 lie on the Extracellular side of the membrane; the sequence is LYMNLG. The chain crosses the membrane as a helical span at residues 475–495; sequence ISAVIGSIACIVIMTPLQFFI. The Cytoplasmic portion of the chain corresponds to 496–562; sequence GNAMSKNAEV…KDATFWTLMA (67 aa). Residues 563-583 form a helical membrane-spanning segment; it reads VLTHIATVLITFVTLGVYVWL. Residues 584–600 lie on the Extracellular side of the membrane; sequence HRDQEFDLNASRLFSSL. Residues 601–621 traverse the membrane as a helical segment; the sequence is ALFQQLTVPLLIFPITVPIII. Residues 622–1409 are Cytoplasmic-facing; it reads AARVSTRRLE…KYGKISDDIY (788 aa). The ABC transporter 1 domain maps to 785-1014; that stretch reads VSINDGLFTW…QPRITAEWNA (230 aa). ATP is bound at residue 822–829; that stretch reads GKNGSGKT. The span at 1141-1151 shows a compositional bias: basic residues; it reads RRRHTLGRRGS. Disordered stretches follow at residues 1141 to 1177 and 1209 to 1265; these read RRRH…SISG and PRVQ…DHVR. A compositionally biased stretch (low complexity) spans 1160-1176; it reads LSGLSTLTATSESSSIS. Positions 1212 to 1232 are enriched in polar residues; the sequence is QSWQPPQHVTHHQPLSRNASS. The span at 1242–1251 shows a compositional bias: basic and acidic residues; the sequence is DVKKSEEARR. The helical transmembrane segment at 1410–1430 threads the bilayer; that stretch reads LMYIRAAGLPIITIFFITALI. One can recognise an ABC transmembrane type-1 2 domain in the interval 1421 to 1715; the sequence is ITIFFITALI…AVTKSPSELR (295 aa). At 1431 to 1468 the chain is on the extracellular side; the sequence is WQCLRVYTDIWLQQWSNVHGRVASKGHVVLHPSEQDHE. A helical transmembrane segment spans residues 1469-1489; that stretch reads VTYYFRMYAAISCVCIIMALV. The Cytoplasmic segment spans residues 1490–1558; sequence STPAGQYAGC…QRLLQFTLLC (69 aa). The helical transmembrane segment at 1559–1579 threads the bilayer; that stretch reads LSAILINVTITPWILVLTLPI. Over 1580-1655 the chain is Extracellular; it reads CGAYYLIQKF…YALLNTSHRW (76 aa). The helical transmembrane segment at 1656-1676 threads the bilayer; sequence LGVSLDYLGGCIVFVATVTAL. The Cytoplasmic segment spans residues 1677-1718; the sequence is TAASVSCRRHYEATTSPSASASPSPFETYAVTKSPSELRPSP. A helical transmembrane segment spans residues 1719-1739; that stretch reads SLVGLAINYTLLVPIYLNWVV. At 1740–2171 the chain is on the extracellular side; that stretch reads KLLADMEMYA…GLLEKGASKW (432 aa). Positions 1766-1778 are enriched in acidic residues; sequence ADADADADADVDA. Disordered stretches follow at residues 1766-1844 and 1866-1902; these read ADAD…GHEN and NFHH…DKDK. Basic and acidic residues-rich tracts occupy residues 1793–1804 and 1887–1902; these read EVDRSSQSDAGD and VIKD…DKDK. In terms of domain architecture, ABC transporter 2 spans 1930-2165; that stretch reads IHFDNVSLRY…EGSVFRGLLE (236 aa). Position 1964 to 1971 (1964 to 1971) interacts with ATP; it reads GRTGSGKS.

This sequence belongs to the ABC transporter superfamily. ABCC family. Conjugate transporter (TC 3.A.1.208) subfamily. In terms of tissue distribution, highly expressed in adult heart. Detected at lower levels in head and abdomen.

It is found in the membrane. In terms of biological role, may function as regulatory subunit of ATP-sensitive potassium channels (KATP) and form KATP channels with a member of the ATP-sensitive inward rectifier potassium channel family. May also have channel activity by itself (in vitro). May protect the heart during hypoxia. May protect against heart failure under conditions of tachycardic stress. This is ATP-binding cassette sub-family C member Sur (Sur) from Drosophila melanogaster (Fruit fly).